Reading from the N-terminus, the 100-residue chain is Large ribosomal subunit protein uL23 (100 aa).

It belongs to the universal ribosomal protein uL23 family. In terms of assembly, part of the 50S ribosomal subunit. Contacts protein L29, and trigger factor when it is bound to the ribosome.

In terms of biological role, one of the early assembly proteins it binds 23S rRNA. One of the proteins that surrounds the polypeptide exit tunnel on the outside of the ribosome. Forms the main docking site for trigger factor binding to the ribosome. The protein is Large ribosomal subunit protein uL23 of Novosphingobium aromaticivorans (strain ATCC 700278 / DSM 12444 / CCUG 56034 / CIP 105152 / NBRC 16084 / F199).